Consider the following 333-residue polypeptide: tRNA N6-adenosine threonylcarbamoyltransferase (333 aa).

Fe cation contacts are provided by histidine 108 and histidine 112. Residues leucine 129–glycine 133, aspartate 161, glutamate 178, and serine 258 each bind substrate. Aspartate 286 serves as a coordination point for Fe cation.

It belongs to the KAE1 / TsaD family. Fe(2+) serves as cofactor.

The protein resides in the cytoplasm. The catalysed reaction is L-threonylcarbamoyladenylate + adenosine(37) in tRNA = N(6)-L-threonylcarbamoyladenosine(37) in tRNA + AMP + H(+). Required for the formation of a threonylcarbamoyl group on adenosine at position 37 (t(6)A37) in tRNAs that read codons beginning with adenine. Is probably involved in the transfer of the threonylcarbamoyl moiety of threonylcarbamoyl-AMP (TC-AMP) to the N6 group of A37. This Pyrobaculum islandicum (strain DSM 4184 / JCM 9189 / GEO3) protein is tRNA N6-adenosine threonylcarbamoyltransferase.